Consider the following 236-residue polypeptide: Methylosome subunit pICln (236 aa).

Positions 1–20 (MSFLKSFPPPGPTEGLRHQQ) are disordered. An N-acetylserine modification is found at serine 2. A phosphoserine mark is found at serine 101, serine 143, serine 192, serine 194, serine 197, and serine 209. The residue at position 222 (threonine 222) is a Phosphothreonine.

This sequence belongs to the pICln (TC 1.A.47) family. In terms of assembly, component of the methylosome, a 20S complex containing at least PRMT5/SKB1, WDR77/MEP50 and CLNS1A/pICln. May mediate SNRPD1 and SNRPD3 methylation. Forms a 6S pICln-Sm complex composed of CLNS1A/pICln, SNRPD1, SNRPD2, SNRPE, SNRPF and SNRPG; ring-like structure where CLNS1A/pICln mimics additional Sm proteins and which is unable to assemble into the core snRNP. Interacts with LSM10 and LSM11. As to expression, widely distributed but expressed more abundantly in nonpigmented ciliary epithelial cells than in pigmented ones.

It is found in the cytoplasm. Its subcellular location is the cytosol. It localises to the nucleus. The protein localises to the cytoskeleton. In terms of biological role, involved in both the assembly of spliceosomal snRNPs and the methylation of Sm proteins. Chaperone that regulates the assembly of spliceosomal U1, U2, U4 and U5 small nuclear ribonucleoproteins (snRNPs), the building blocks of the spliceosome, and thereby plays an important role in the splicing of cellular pre-mRNAs. Most spliceosomal snRNPs contain a common set of Sm proteins SNRPB, SNRPD1, SNRPD2, SNRPD3, SNRPE, SNRPF and SNRPG that assemble in a heptameric protein ring on the Sm site of the small nuclear RNA to form the core snRNP (Sm core). In the cytosol, the Sm proteins SNRPD1, SNRPD2, SNRPE, SNRPF and SNRPG are trapped in an inactive 6S pICln-Sm complex by the chaperone CLNS1A that controls the assembly of the core snRNP. Dissociation by the SMN complex of CLNS1A from the trapped Sm proteins and their transfer to an SMN-Sm complex triggers the assembly of core snRNPs and their transport to the nucleus. This Oryctolagus cuniculus (Rabbit) protein is Methylosome subunit pICln (CLNS1A).